The sequence spans 828 residues: Periplasmic nitrate reductase (828 aa).

A signal peptide (tat-type signal) is located at residues 1 to 31; it reads MKLSRRSFMKANAVAAAAAAAGLSVPGVARA. Positions 39–95 constitute a 4Fe-4S Mo/W bis-MGD-type domain; that stretch reads IKWDKAPCRFCGTGCGVLVGTQQGRVVACQGDPDAPVNRGLNCIKGYFLPKIMYGKD. Residues Cys46, Cys49, Cys53, and Cys81 each contribute to the [4Fe-4S] cluster site. Mo-bis(molybdopterin guanine dinucleotide) is bound by residues Lys83, Gln150, Asn175, Cys179, 212–219, 243–247, 262–264, Met372, Gln376, Asn482, 508–509, Lys531, Asp558, and 718–727; these read WGSNMAEM, STYQH, QSD, SD, and TGRVLEHWHT. Phe794 is a binding site for substrate. 2 residues coordinate Mo-bis(molybdopterin guanine dinucleotide): Asn802 and Lys819.

It belongs to the prokaryotic molybdopterin-containing oxidoreductase family. NasA/NapA/NarB subfamily. In terms of assembly, component of the periplasmic nitrate reductase NapAB complex composed of NapA and NapB. The cofactor is [4Fe-4S] cluster. Mo-bis(molybdopterin guanine dinucleotide) is required as a cofactor. Predicted to be exported by the Tat system. The position of the signal peptide cleavage has not been experimentally proven.

The protein localises to the periplasm. It carries out the reaction 2 Fe(II)-[cytochrome] + nitrate + 2 H(+) = 2 Fe(III)-[cytochrome] + nitrite + H2O. Functionally, catalytic subunit of the periplasmic nitrate reductase complex NapAB. Receives electrons from NapB and catalyzes the reduction of nitrate to nitrite. The protein is Periplasmic nitrate reductase of Escherichia coli O1:K1 / APEC.